The following is a 271-amino-acid chain: Formamidopyrimidine-DNA glycosylase (271 aa).

The active-site Schiff-base intermediate with DNA is P2. The Proton donor role is filled by E3. K58 functions as the Proton donor; for beta-elimination activity in the catalytic mechanism. Residues H91, R110, and R152 each contribute to the DNA site. The FPG-type zinc-finger motif lies at 237–271; the sequence is RVYDRAGQPCRVCGEPIRCVRLGQRATYYCPRCQR. R261 (proton donor; for delta-elimination activity) is an active-site residue.

It belongs to the FPG family. As to quaternary structure, monomer. Zn(2+) is required as a cofactor.

The catalysed reaction is Hydrolysis of DNA containing ring-opened 7-methylguanine residues, releasing 2,6-diamino-4-hydroxy-5-(N-methyl)formamidopyrimidine.. It catalyses the reaction 2'-deoxyribonucleotide-(2'-deoxyribose 5'-phosphate)-2'-deoxyribonucleotide-DNA = a 3'-end 2'-deoxyribonucleotide-(2,3-dehydro-2,3-deoxyribose 5'-phosphate)-DNA + a 5'-end 5'-phospho-2'-deoxyribonucleoside-DNA + H(+). In terms of biological role, involved in base excision repair of DNA damaged by oxidation or by mutagenic agents. Acts as a DNA glycosylase that recognizes and removes damaged bases. Has a preference for oxidized purines, such as 7,8-dihydro-8-oxoguanine (8-oxoG). Has AP (apurinic/apyrimidinic) lyase activity and introduces nicks in the DNA strand. Cleaves the DNA backbone by beta-delta elimination to generate a single-strand break at the site of the removed base with both 3'- and 5'-phosphates. The chain is Formamidopyrimidine-DNA glycosylase from Methylococcus capsulatus (strain ATCC 33009 / NCIMB 11132 / Bath).